A 189-amino-acid polypeptide reads, in one-letter code: Thymidine kinase (189 aa).

ATP is bound by residues 9-16 (GTMNSGKT) and 85-88 (DESQ). Residue E86 is the Proton acceptor of the active site. Zn(2+) contacts are provided by C143, C146, C180, and H183.

Belongs to the thymidine kinase family. In terms of assembly, homotetramer.

The protein localises to the cytoplasm. The catalysed reaction is thymidine + ATP = dTMP + ADP + H(+). The polypeptide is Thymidine kinase (Streptococcus pyogenes serotype M18 (strain MGAS8232)).